The following is a 602-amino-acid chain: Myotubularin (602 aa).

Residues 1 to 40 form a disordered region; the sequence is MASSSASDCDAHPVERESMRKVSQDGVRQDMSKSGPRLPG. The segment covering 9-31 has biased composition (basic and acidic residues); it reads CDAHPVERESMRKVSQDGVRQDM. S18 is modified (phosphoserine). Residues 28-97 enclose the GRAM domain; it reads RQDMSKSGPR…GVISRIEKMG (70 aa). A Myotubularin phosphatase domain is found at 163–538; that stretch reads GWAIYNPVEE…RHLELWVNYY (376 aa). Residues N288, N313, and I314 each contribute to the a 1,2-diacyl-sn-glycero-3-phospho-(1D-myo-inositol-3,5-bisphosphate) site. A 1,2-diacyl-sn-glycero-3-phospho-(1D-myo-inositol-3-phosphate) is bound by residues N288, N313, and I314. C375 (phosphocysteine intermediate) is an active-site residue. A 1,2-diacyl-sn-glycero-3-phospho-(1D-myo-inositol-3,5-bisphosphate) is bound by residues S376, D377, G378, W379, D380, R381, K417, and R421. Residues S376, D377, G378, W379, D380, and R381 each coordinate a 1,2-diacyl-sn-glycero-3-phospho-(1D-myo-inositol-3-phosphate). R421 is a binding site for a 1,2-diacyl-sn-glycero-3-phospho-(1D-myo-inositol-3-phosphate). At T495 the chain carries Phosphothreonine. Positions 578 to 592 are enriched in polar residues; the sequence is PTKLTDSSTPPSGSA. The interval 578 to 602 is disordered; it reads PTKLTDSSTPPSGSAQIAPRMQTHF.

It belongs to the protein-tyrosine phosphatase family. Non-receptor class myotubularin subfamily. In terms of assembly, heterodimer with MTMR12. Interacts with KMT2A/MLL1 (via SET domain). Interacts with DES in skeletal muscle but not in cardiac muscle. Interacts with SPEG.

The protein resides in the cytoplasm. It localises to the cell membrane. The protein localises to the cell projection. Its subcellular location is the filopodium. It is found in the ruffle. The protein resides in the late endosome. It localises to the myofibril. The protein localises to the sarcomere. The enzyme catalyses a 1,2-diacyl-sn-glycero-3-phospho-(1D-myo-inositol-3-phosphate) + H2O = a 1,2-diacyl-sn-glycero-3-phospho-(1D-myo-inositol) + phosphate. It carries out the reaction a 1,2-diacyl-sn-glycero-3-phospho-(1D-myo-inositol-3,5-bisphosphate) + H2O = a 1,2-diacyl-sn-glycero-3-phospho-(1D-myo-inositol-5-phosphate) + phosphate. The catalysed reaction is 1,2-dioctanoyl-sn-glycero-3-phospho-(1-D-myo-inositol-3-phosphate) + H2O = 1,2-dioctanoyl-sn-glycero-3-phospho-(1D-myo-inositol) + phosphate. It catalyses the reaction 1,2-dioctanoyl-sn-glycero-3-phospho-(1D-myo-inositol-3,5-bisphosphate) + H2O = 1,2-dioctanoyl-sn-glycero-3-phospho-(1D-myo-inositol-5-phosphate) + phosphate. The enzyme catalyses 1,2-dihexadecanoyl-sn-glycero-3-phospho-(1D-myo-inositol-3,5-phosphate) + H2O = 1,2-dihexadecanoyl-sn-glycero-3-phospho-(1D-myo-inositol-5-phosphate) + phosphate. Allosterically activated by phosphatidylinositol 5-phosphate (PI5P). Lipid phosphatase which dephosphorylates phosphatidylinositol 3-monophosphate (PI3P) and phosphatidylinositol 3,5-bisphosphate (PI(3,5)P2). Has also been shown to dephosphorylate phosphotyrosine- and phosphoserine-containing peptides. Negatively regulates EGFR degradation through regulation of EGFR trafficking from the late endosome to the lysosome. Plays a role in vacuolar formation and morphology. Regulates desmin intermediate filament assembly and architecture. Plays a role in mitochondrial morphology and positioning. Required for skeletal muscle maintenance but not for myogenesis. In skeletal muscles, stabilizes MTMR12 protein levels. The sequence is that of Myotubularin from Rattus norvegicus (Rat).